We begin with the raw amino-acid sequence, 173 residues long: ATP synthase subunit b (173 aa).

The chain crosses the membrane as a helical span at residues 12–32 (LDVNPGLVVWTLVTFLVVVLV).

It belongs to the ATPase B chain family. In terms of assembly, F-type ATPases have 2 components, F(1) - the catalytic core - and F(0) - the membrane proton channel. F(1) has five subunits: alpha(3), beta(3), gamma(1), delta(1), epsilon(1). F(0) has three main subunits: a(1), b(2) and c(10-14). The alpha and beta chains form an alternating ring which encloses part of the gamma chain. F(1) is attached to F(0) by a central stalk formed by the gamma and epsilon chains, while a peripheral stalk is formed by the delta and b chains.

It localises to the cell inner membrane. Its function is as follows. F(1)F(0) ATP synthase produces ATP from ADP in the presence of a proton or sodium gradient. F-type ATPases consist of two structural domains, F(1) containing the extramembraneous catalytic core and F(0) containing the membrane proton channel, linked together by a central stalk and a peripheral stalk. During catalysis, ATP synthesis in the catalytic domain of F(1) is coupled via a rotary mechanism of the central stalk subunits to proton translocation. In terms of biological role, component of the F(0) channel, it forms part of the peripheral stalk, linking F(1) to F(0). The protein is ATP synthase subunit b of Leptospira interrogans serogroup Icterohaemorrhagiae serovar copenhageni (strain Fiocruz L1-130).